The following is a 961-amino-acid chain: Phosphofurin acidic cluster sorting protein 1 (961 aa).

Residues 1 to 19 (MAERGGAGGGPGGSGGGSS) are compositionally biased toward gly residues. 2 disordered regions span residues 1 to 70 (MAER…SSST) and 76 to 95 (VAVA…RTPA). The residue at position 2 (Ala-2) is an N-acetylalanine. A compositionally biased stretch (low complexity) spans 20–34 (QRGSGVAQSPQQQPQ). A Phosphoserine modification is found at Ser-28. The span at 35–46 (QQPPQPQQPTPP) shows a compositional bias: pro residues. Thr-44 is modified (phosphothreonine). Residues 51 to 70 (ATSSSSSTSAAAASSSSSST) are compositionally biased toward low complexity. Phosphotyrosine is present on Tyr-249. Residues 260-271 (GIKSKLSDRSPD) are compositionally biased toward basic and acidic residues. Disordered regions lie at residues 260–297 (GIKS…LHGQ) and 375–426 (NPSD…GKDT). The span at 274-291 (NYSEEEEESFSSEQEGSD) shows a compositional bias: acidic residues. A coiled-coil region spans residues 351–375 (HVSREQIREVEEDLDELYDSLEMYN). Phosphoserine occurs at positions 377 and 379. Positions 404–426 (MSQSSSQTEIGSLNSKGSLGKDT) are enriched in polar residues. Phosphoserine occurs at positions 428 and 493. Disordered regions lie at residues 475 to 540 (EKVK…HSTQ) and 758 to 802 (SPST…SMSS). Phosphothreonine is present on Thr-502. 5 positions are modified to phosphoserine: Ser-517, Ser-526, Ser-527, Ser-529, and Ser-532. The segment covering 768–802 (SPVVSLTVPSTSPPSSSGLSRDATATPPSSPSMSS) has biased composition (low complexity).

Belongs to the PACS family. As to quaternary structure, associates with AP-1 and AP-3 but not with AP-2 complexes. Interacts with FURIN. Forms a ternary complex with FURIN and AP-1. Interacts with PKD2 (via acidic region). Interacts with SORL1. Interacts with WDR37.

The protein resides in the golgi apparatus. The protein localises to the trans-Golgi network. Its function is as follows. Coat protein that is involved in the localization of trans-Golgi network (TGN) membrane proteins that contain acidic cluster sorting motifs. Controls the endosome-to-Golgi trafficking of furin and mannose-6-phosphate receptor by connecting the acidic-cluster-containing cytoplasmic domain of these molecules with the adapter-protein complex-1 (AP-1) of endosomal clathrin-coated membrane pits. Required for normal ER Ca2+ handling in lymphocytes. Together with WDR37, it plays an essential role in lymphocyte development, quiescence and survival. Required for stabilizing peripheral lymphocyte populations. This is Phosphofurin acidic cluster sorting protein 1 (Pacs1) from Mus musculus (Mouse).